Consider the following 105-residue polypeptide: Cysteine-rich venom protein VAR2 (105 aa).

The N-terminal stretch at 1-22 (MILLKLYLTLAAILCQSRGTTS) is a signal peptide.

The protein belongs to the CRISP family. Post-translationally, contains 8 disulfide bonds. As to expression, expressed by the venom gland.

Its subcellular location is the secreted. In terms of biological role, blocks ryanodine receptors, and potassium channels. In Varanus acanthurus (Ridge-tailed monitor), this protein is Cysteine-rich venom protein VAR2.